The chain runs to 455 residues: Keratin, type I cuticular Ha5 (455 aa).

The head stretch occupies residues Met-1–Glu-97. The IF rod domain maps to Glu-97–Leu-408. The tract at residues Lys-98–Trp-132 is coil 1A. The interval Cys-133–Asp-143 is linker 1. Residues Tyr-144–Cys-244 are coil 1B. A linker 12 region spans residues Gln-245–Val-260. Residues Asp-261–Glu-404 are coil 2. The tract at residues Asp-405–Phe-455 is tail.

The protein belongs to the intermediate filament family.

The chain is Keratin, type I cuticular Ha5 from Mus musculus (Mouse).